Here is a 615-residue protein sequence, read N- to C-terminus: Albumin (615 aa).

A signal peptide spans 1–18 (MKWVTLISFIFLFSSATS). A propeptide spanning residues 19-23 (RNLQR) is cleaved from the precursor. 3 Albumin domains span residues 22 to 214 (QRFA…IVMR), 215 to 407 (EKAK…QLNQ), and 408 to 605 (HIKE…NLIV). Histidine 30 is a binding site for Cu cation. 2 residues coordinate Ca(2+): glutamate 33 and aspartate 40. 7 disulfide bridges follow: cysteine 80-cysteine 89, cysteine 102-cysteine 118, cysteine 117-cysteine 128, cysteine 152-cysteine 197, cysteine 196-cysteine 205, cysteine 228-cysteine 274, and cysteine 273-cysteine 281. Positions 272, 277, 280, and 283 each coordinate Ca(2+). Residue aspartate 277 coordinates Zn(2+). Disulfide bonds link cysteine 293-cysteine 307, cysteine 306-cysteine 317, cysteine 344-cysteine 389, cysteine 388-cysteine 397, cysteine 420-cysteine 466, cysteine 465-cysteine 476, cysteine 489-cysteine 505, cysteine 504-cysteine 515, cysteine 542-cysteine 587, and cysteine 586-cysteine 595. Asparagine 500 carries an N-linked (GlcNAc...) asparagine glycan.

This sequence belongs to the ALB/AFP/VDB family. In terms of tissue distribution, plasma.

Its subcellular location is the secreted. Functionally, binds water, Ca(2+), Na(+), K(+), fatty acids, hormones, bilirubin and drugs. Its main function is the regulation of the colloidal osmotic pressure of blood. In Gallus gallus (Chicken), this protein is Albumin (ALB).